Consider the following 157-residue polypeptide: Thiocyanate hydrolase subunit beta (157 aa).

As to quaternary structure, heterododecamer consisting of 4 alpha, 4 beta, and 4 gamma subunits.

The enzyme catalyses thiocyanate + H2O + 2 H(+) = carbonyl sulfide + NH4(+). It functions in the pathway organosulfur degradation; thiocyanate degradation. Functionally, involved in the degradation of thiocyanate. The sequence is that of Thiocyanate hydrolase subunit beta (scnB) from Thiobacillus thioparus.